We begin with the raw amino-acid sequence, 152 residues long: Endoribonuclease YbeY (152 aa).

Residues histidine 114, histidine 118, and histidine 124 each coordinate Zn(2+).

The protein belongs to the endoribonuclease YbeY family. The cofactor is Zn(2+).

It localises to the cytoplasm. In terms of biological role, single strand-specific metallo-endoribonuclease involved in late-stage 70S ribosome quality control and in maturation of the 3' terminus of the 16S rRNA. This is Endoribonuclease YbeY from Wigglesworthia glossinidia brevipalpis.